A 100-amino-acid chain; its full sequence is Phosphoribosyl-ATP pyrophosphatase (100 aa).

Belongs to the PRA-PH family.

It localises to the cytoplasm. The enzyme catalyses 1-(5-phospho-beta-D-ribosyl)-ATP + H2O = 1-(5-phospho-beta-D-ribosyl)-5'-AMP + diphosphate + H(+). It functions in the pathway amino-acid biosynthesis; L-histidine biosynthesis; L-histidine from 5-phospho-alpha-D-ribose 1-diphosphate: step 2/9. This Haloquadratum walsbyi (strain DSM 16790 / HBSQ001) protein is Phosphoribosyl-ATP pyrophosphatase.